A 289-amino-acid chain; its full sequence is Ribosomal protein L11 methyltransferase (289 aa).

S-adenosyl-L-methionine is bound by residues Thr-135, Gly-156, Asp-179, and Asn-225.

The protein belongs to the methyltransferase superfamily. PrmA family.

The protein localises to the cytoplasm. The catalysed reaction is L-lysyl-[protein] + 3 S-adenosyl-L-methionine = N(6),N(6),N(6)-trimethyl-L-lysyl-[protein] + 3 S-adenosyl-L-homocysteine + 3 H(+). Its function is as follows. Methylates ribosomal protein L11. The chain is Ribosomal protein L11 methyltransferase from Chlorobaculum parvum (strain DSM 263 / NCIMB 8327) (Chlorobium vibrioforme subsp. thiosulfatophilum).